We begin with the raw amino-acid sequence, 727 residues long: NADH-ubiquinone oxidoreductase 75 kDa subunit, mitochondrial (727 aa).

A mitochondrion-targeting transit peptide spans 1 to 23 (MLRIPVRKALVVLSKSPKGCVRT). One can recognise a 2Fe-2S ferredoxin-type domain in the interval 30 to 108 (NLIEVFVDGQ…GWNILTNSKK (79 aa)). [2Fe-2S] cluster contacts are provided by Cys64, Cys75, and Cys78. Residue Lys84 is modified to N6-acetyllysine. Cys92 is a binding site for [2Fe-2S] cluster. A 4Fe-4S His(Cys)3-ligated-type domain is found at 108-147 (KSKKAREGVMEFLLANHPLDCPICDQGGECDLQDQSMMFG). [4Fe-4S] cluster contacts are provided by His124, Cys128, Cys131, Cys137, Cys176, Cys179, Cys182, and Cys226. Residues 245–301 (TRKTESIDVMDAVGSNIVVSTRTGEVMRILPRMHEDINEEWISDKTRFAYDGLKRQR) enclose the 4Fe-4S Mo/W bis-MGD-type domain. N6-acetyllysine occurs at positions 467, 499, and 709.

This sequence belongs to the complex I 75 kDa subunit family. In terms of assembly, core subunit of respiratory chain NADH dehydrogenase (Complex I) which is composed of 45 different subunits. This is the largest subunit of complex I and it is a component of the iron-sulfur (IP) fragment of the enzyme. Complex I associates with ubiquinol-cytochrome reductase complex (Complex III) to form supercomplexes. Interacts with MDM2 and AKAP1. The cofactor is [2Fe-2S] cluster. [4Fe-4S] cluster is required as a cofactor.

It localises to the mitochondrion inner membrane. The enzyme catalyses a ubiquinone + NADH + 5 H(+)(in) = a ubiquinol + NAD(+) + 4 H(+)(out). In terms of biological role, core subunit of the mitochondrial membrane respiratory chain NADH dehydrogenase (Complex I) which catalyzes electron transfer from NADH through the respiratory chain, using ubiquinone as an electron acceptor. Essential for catalysing the entry and efficient transfer of electrons within complex I. Plays a key role in the assembly and stability of complex I and participates in the association of complex I with ubiquinol-cytochrome reductase complex (Complex III) to form supercomplexes. This is NADH-ubiquinone oxidoreductase 75 kDa subunit, mitochondrial (NDUFS1) from Pan troglodytes (Chimpanzee).